A 493-amino-acid polypeptide reads, in one-letter code: 3-octaprenyl-4-hydroxybenzoate carboxy-lyase (493 aa).

Asn-172 contacts Mn(2+). Prenylated FMN contacts are provided by residues 175-177, 189-191, and 194-195; these read IYR, RWL, and RG. Glu-238 lines the Mn(2+) pocket. Asp-287 functions as the Proton donor in the catalytic mechanism.

It belongs to the UbiD family. In terms of assembly, homohexamer. Prenylated FMN is required as a cofactor. It depends on Mn(2+) as a cofactor.

It is found in the cell membrane. It catalyses the reaction a 4-hydroxy-3-(all-trans-polyprenyl)benzoate + H(+) = a 2-(all-trans-polyprenyl)phenol + CO2. Its pathway is cofactor biosynthesis; ubiquinone biosynthesis. Its function is as follows. Catalyzes the decarboxylation of 3-octaprenyl-4-hydroxy benzoate to 2-octaprenylphenol, an intermediate step in ubiquinone biosynthesis. This chain is 3-octaprenyl-4-hydroxybenzoate carboxy-lyase, found in Shewanella baltica (strain OS155 / ATCC BAA-1091).